The primary structure comprises 316 residues: Acetyl-coenzyme A carboxylase carboxyl transferase subunit beta (316 aa).

The CoA carboxyltransferase N-terminal domain maps to leucine 39 to methionine 308. Zn(2+)-binding residues include cysteine 43, cysteine 46, cysteine 62, and cysteine 65. The C4-type zinc-finger motif lies at cysteine 43–cysteine 65.

It belongs to the AccD/PCCB family. As to quaternary structure, acetyl-CoA carboxylase is a heterohexamer composed of biotin carboxyl carrier protein (AccB), biotin carboxylase (AccC) and two subunits each of ACCase subunit alpha (AccA) and ACCase subunit beta (AccD). Requires Zn(2+) as cofactor.

The protein resides in the cytoplasm. It carries out the reaction N(6)-carboxybiotinyl-L-lysyl-[protein] + acetyl-CoA = N(6)-biotinyl-L-lysyl-[protein] + malonyl-CoA. Its pathway is lipid metabolism; malonyl-CoA biosynthesis; malonyl-CoA from acetyl-CoA: step 1/1. In terms of biological role, component of the acetyl coenzyme A carboxylase (ACC) complex. Biotin carboxylase (BC) catalyzes the carboxylation of biotin on its carrier protein (BCCP) and then the CO(2) group is transferred by the transcarboxylase to acetyl-CoA to form malonyl-CoA. The protein is Acetyl-coenzyme A carboxylase carboxyl transferase subunit beta of Nostoc punctiforme (strain ATCC 29133 / PCC 73102).